The primary structure comprises 151 residues: UPF0208 membrane protein YfbV (151 aa).

Helical transmembrane passes span 46-65 and 69-91; these read YAIRFMPPIAVFTLCWQIAL and LGPAVATALFALSLPMQGLWWLG.

The protein belongs to the UPF0208 family.

It localises to the cell inner membrane. In Shigella flexneri serotype 5b (strain 8401), this protein is UPF0208 membrane protein YfbV.